Here is a 328-residue protein sequence, read N- to C-terminus: GMP reductase (328 aa).

The active-site Thioimidate intermediate is C176. 205–228 lines the NADP(+) pocket; sequence IIADGGIRTHGDIAKSIRFGASMI.

The protein belongs to the IMPDH/GMPR family. GuaC type 2 subfamily.

It carries out the reaction IMP + NH4(+) + NADP(+) = GMP + NADPH + 2 H(+). Catalyzes the irreversible NADPH-dependent deamination of GMP to IMP. It functions in the conversion of nucleobase, nucleoside and nucleotide derivatives of G to A nucleotides, and in maintaining the intracellular balance of A and G nucleotides. The polypeptide is GMP reductase (Streptococcus pneumoniae (strain CGSP14)).